The following is a 158-amino-acid chain: Transcription elongation factor GreA (158 aa).

Residues 53-73 (EQQGFIEGRIKEIEAKLSNAQ) are a coiled coil.

The protein belongs to the GreA/GreB family.

Necessary for efficient RNA polymerase transcription elongation past template-encoded arresting sites. The arresting sites in DNA have the property of trapping a certain fraction of elongating RNA polymerases that pass through, resulting in locked ternary complexes. Cleavage of the nascent transcript by cleavage factors such as GreA or GreB allows the resumption of elongation from the new 3'terminus. GreA releases sequences of 2 to 3 nucleotides. The sequence is that of Transcription elongation factor GreA from Thioalkalivibrio sulfidiphilus (strain HL-EbGR7).